The chain runs to 525 residues: Chromosomal replication initiator protein DnaA (525 aa).

The segment at Met1–Ala71 is domain I, interacts with DnaA modulators. Positions Ala71–Ser188 are domain II. Residues Ala160–Asp182 form a disordered region. Over residues Pro169–Ala181 the composition is skewed to low complexity. A domain III, AAA+ region region spans residues Lys189–Ser405. Residues Gly233, Gly235, Lys236, and Thr237 each contribute to the ATP site. The segment at Lys406–Gly525 is domain IV, binds dsDNA.

This sequence belongs to the DnaA family. As to quaternary structure, oligomerizes as a right-handed, spiral filament on DNA at oriC.

Its subcellular location is the cytoplasm. Plays an essential role in the initiation and regulation of chromosomal replication. ATP-DnaA binds to the origin of replication (oriC) to initiate formation of the DNA replication initiation complex once per cell cycle. Binds the DnaA box (a 9 base pair repeat at the origin) and separates the double-stranded (ds)DNA. Forms a right-handed helical filament on oriC DNA; dsDNA binds to the exterior of the filament while single-stranded (ss)DNA is stabiized in the filament's interior. The ATP-DnaA-oriC complex binds and stabilizes one strand of the AT-rich DNA unwinding element (DUE), permitting loading of DNA polymerase. After initiation quickly degrades to an ADP-DnaA complex that is not apt for DNA replication. Binds acidic phospholipids. The chain is Chromosomal replication initiator protein DnaA from Burkholderia ambifaria (strain ATCC BAA-244 / DSM 16087 / CCUG 44356 / LMG 19182 / AMMD) (Burkholderia cepacia (strain AMMD)).